Consider the following 161-residue polypeptide: Putative ecotin-like protein (161 aa).

The N-terminal stretch at 1 to 24 (MSLRPIETAIASLTMLMLQGCAHA) is a signal peptide.

The protein belongs to the protease inhibitor I11 (ecotin) family.

The chain is Putative ecotin-like protein from Methylobacillus flagellatus (strain ATCC 51484 / DSM 6875 / VKM B-1610 / KT).